The sequence spans 156 residues: Deoxyuridine 5'-triphosphate nucleotidohydrolase (156 aa).

Belongs to the dCTP deaminase family. Archaeal dUTPase subfamily. Homotrimer.

It catalyses the reaction dUTP + H2O = dUMP + diphosphate + H(+). It participates in pyrimidine metabolism; dUMP biosynthesis; dUMP from dCTP (dUTP route): step 2/2. This enzyme is involved in nucleotide metabolism: it produces dUMP, the immediate precursor of thymidine nucleotides and it decreases the intracellular concentration of dUTP so that uracil cannot be incorporated into DNA. This chain is Deoxyuridine 5'-triphosphate nucleotidohydrolase, found in Methanocaldococcus jannaschii (strain ATCC 43067 / DSM 2661 / JAL-1 / JCM 10045 / NBRC 100440) (Methanococcus jannaschii).